We begin with the raw amino-acid sequence, 256 residues long: Probable ABC transporter ATP-binding protein SPy_0285/M5005_Spy0242 (256 aa).

Residues 4–246 (LEINNLHVSI…EKEGYAGIAQ (243 aa)) enclose the ABC transporter domain. Position 36 to 43 (36 to 43 (GPNGTGKS)) interacts with ATP.

This sequence belongs to the ABC transporter superfamily. Ycf16 family.

The protein localises to the cell membrane. This chain is Probable ABC transporter ATP-binding protein SPy_0285/M5005_Spy0242, found in Streptococcus pyogenes serotype M1.